We begin with the raw amino-acid sequence, 70 residues long: Cold shock-like protein CspI (70 aa).

The region spanning 7 to 67 (GLVKWFNPEK…GPKGPAAVHV (61 aa)) is the CSD domain.

The protein localises to the cytoplasm. In Escherichia coli O6:H1 (strain CFT073 / ATCC 700928 / UPEC), this protein is Cold shock-like protein CspI (cspI).